We begin with the raw amino-acid sequence, 180 residues long: uncharacterized protein (180 aa).

This is an uncharacterized protein from Magallana gigas (Pacific oyster).